The sequence spans 216 residues: Small ribosomal subunit protein uS3c (216 aa).

Residues 43–118 (IKNYLQKNMR…KLNIAITRIT (76 aa)) enclose the KH type-2 domain.

This sequence belongs to the universal ribosomal protein uS3 family. In terms of assembly, part of the 30S ribosomal subunit.

It localises to the plastid. The protein resides in the chloroplast. In Eucalyptus globulus subsp. globulus (Tasmanian blue gum), this protein is Small ribosomal subunit protein uS3c (rps3).